We begin with the raw amino-acid sequence, 284 residues long: Bifunctional protein FolD (284 aa).

Residues 166-168 (GAS) and Ile-232 each bind NADP(+).

Belongs to the tetrahydrofolate dehydrogenase/cyclohydrolase family. As to quaternary structure, homodimer.

The catalysed reaction is (6R)-5,10-methylene-5,6,7,8-tetrahydrofolate + NADP(+) = (6R)-5,10-methenyltetrahydrofolate + NADPH. It carries out the reaction (6R)-5,10-methenyltetrahydrofolate + H2O = (6R)-10-formyltetrahydrofolate + H(+). Its pathway is one-carbon metabolism; tetrahydrofolate interconversion. In terms of biological role, catalyzes the oxidation of 5,10-methylenetetrahydrofolate to 5,10-methenyltetrahydrofolate and then the hydrolysis of 5,10-methenyltetrahydrofolate to 10-formyltetrahydrofolate. This chain is Bifunctional protein FolD, found in Shewanella baltica (strain OS195).